Consider the following 180-residue polypeptide: UPF0303 protein PSEEN3311 (180 aa).

The protein belongs to the UPF0303 family.

This Pseudomonas entomophila (strain L48) protein is UPF0303 protein PSEEN3311.